Reading from the N-terminus, the 373-residue chain is Putative aminopeptidase SgcX (373 aa).

Histidine 67 and aspartate 180 together coordinate a divalent metal cation. Glutamate 212 (proton acceptor) is an active-site residue. The a divalent metal cation site is built by glutamate 213, aspartate 235, and histidine 329.

The protein belongs to the peptidase M42 family. Requires a divalent metal cation as cofactor.

In Escherichia coli (strain K12), this protein is Putative aminopeptidase SgcX (sgcX).